The chain runs to 861 residues: FO synthase (861 aa).

Radical SAM core domains follow at residues 69–319 and 528–763; these read ITYS…LQAP and VTYI…LLHP. A cofG-like region spans residues 70 to 401; it reads TYSKSVFIPL…PRLLPHVRAL (332 aa). [4Fe-4S] cluster is bound by residues Cys-83, Cys-87, Cys-90, Cys-542, Cys-546, and Cys-549. Residues 505–838 form a cofH-like region; that stretch reads DGPALDALTR…KPRTTLYGEV (334 aa).

It in the N-terminal section; belongs to the radical SAM superfamily. CofG family. In the C-terminal section; belongs to the radical SAM superfamily. CofH family. It depends on [4Fe-4S] cluster as a cofactor.

The enzyme catalyses 5-amino-6-(D-ribitylamino)uracil + L-tyrosine + S-adenosyl-L-methionine = 5-amino-5-(4-hydroxybenzyl)-6-(D-ribitylimino)-5,6-dihydrouracil + 2-iminoacetate + 5'-deoxyadenosine + L-methionine + H(+). It catalyses the reaction 5-amino-5-(4-hydroxybenzyl)-6-(D-ribitylimino)-5,6-dihydrouracil + S-adenosyl-L-methionine = 7,8-didemethyl-8-hydroxy-5-deazariboflavin + 5'-deoxyadenosine + L-methionine + NH4(+) + H(+). The protein operates within cofactor biosynthesis; coenzyme F0 biosynthesis. In terms of biological role, catalyzes the radical-mediated synthesis of 7,8-didemethyl-8-hydroxy-5-deazariboflavin (FO) from 5-amino-6-(D-ribitylamino)uracil and L-tyrosine. The sequence is that of FO synthase (fbiC) from Streptomyces avermitilis (strain ATCC 31267 / DSM 46492 / JCM 5070 / NBRC 14893 / NCIMB 12804 / NRRL 8165 / MA-4680).